Reading from the N-terminus, the 292-residue chain is tRNA (adenine(9)-N1)-methyltransferase (292 aa).

The region spanning 72-253 (TFRKGGKKVS…ISLQSKSDKI (182 aa)) is the SAM-dependent MTase TRM10-type domain.

This sequence belongs to the class IV-like SAM-binding methyltransferase superfamily. TRM10 family.

It is found in the cytoplasm. The enzyme catalyses adenosine(9) in tRNA + S-adenosyl-L-methionine = N(1)-methyladenosine(9) in tRNA + S-adenosyl-L-homocysteine + H(+). In terms of biological role, catalyzes the S-adenosyl-L-methionine-dependent formation of N(1)-methyladenine at position 9 (m1A9) in tRNA. In Sulfolobus acidocaldarius (strain ATCC 33909 / DSM 639 / JCM 8929 / NBRC 15157 / NCIMB 11770), this protein is tRNA (adenine(9)-N1)-methyltransferase.